The sequence spans 400 residues: Acetate kinase (400 aa).

Asparagine 10 contacts Mg(2+). Lysine 17 serves as a coordination point for ATP. Residue arginine 89 participates in substrate binding. Aspartate 148 acts as the Proton donor/acceptor in catalysis. Residues 208–212 (HLGNG), 283–285 (DCR), and 331–335 (GIGEN) each bind ATP. Mg(2+) is bound at residue glutamate 385.

This sequence belongs to the acetokinase family. As to quaternary structure, homodimer. Mg(2+) serves as cofactor. Mn(2+) is required as a cofactor.

It is found in the cytoplasm. The catalysed reaction is acetate + ATP = acetyl phosphate + ADP. Its pathway is metabolic intermediate biosynthesis; acetyl-CoA biosynthesis; acetyl-CoA from acetate: step 1/2. Functionally, catalyzes the formation of acetyl phosphate from acetate and ATP. Can also catalyze the reverse reaction. The chain is Acetate kinase from Haemophilus ducreyi (strain 35000HP / ATCC 700724).